A 254-amino-acid polypeptide reads, in one-letter code: MTPQRIGFVASNAPVAQEALNVMAARYGQCPLPEADAIVALGGDGFMLQTLHETQSLDIPVYGMNRGTVGFLMNGYAEDGLRERLAEAEEEILNPLAMTAVTGAGEVFHRIAINEVSLLRAGPQAAWLKISVDGKVRMEELVCDGALVCTPAGSTAYNYSAHGPILPIGADVLALTAIAPFRPRRWRGALLPKTALVRFDVIDAQKRPVMADADGRSVRDVVSVEIRTEPAVRHRLLFDPGHGLEERLIREQFV.

The active-site Proton acceptor is D44. NAD(+) contacts are provided by residues 44 to 45, 114 to 115, D144, A152, 155 to 160, and A179; these read DG, NE, and TAYNYS.

The protein belongs to the NAD kinase family. Requires a divalent metal cation as cofactor.

Its subcellular location is the cytoplasm. The enzyme catalyses NAD(+) + ATP = ADP + NADP(+) + H(+). Functionally, involved in the regulation of the intracellular balance of NAD and NADP, and is a key enzyme in the biosynthesis of NADP. Catalyzes specifically the phosphorylation on 2'-hydroxyl of the adenosine moiety of NAD to yield NADP. In Cereibacter sphaeroides (strain ATCC 17023 / DSM 158 / JCM 6121 / CCUG 31486 / LMG 2827 / NBRC 12203 / NCIMB 8253 / ATH 2.4.1.) (Rhodobacter sphaeroides), this protein is NAD kinase.